Reading from the N-terminus, the 345-residue chain is Nicotinate-nucleotide--dimethylbenzimidazole phosphoribosyltransferase (345 aa).

Residue glutamate 312 is the Proton acceptor of the active site.

This sequence belongs to the CobT family.

It carries out the reaction 5,6-dimethylbenzimidazole + nicotinate beta-D-ribonucleotide = alpha-ribazole 5'-phosphate + nicotinate + H(+). Its pathway is nucleoside biosynthesis; alpha-ribazole biosynthesis; alpha-ribazole from 5,6-dimethylbenzimidazole: step 1/2. Its function is as follows. Catalyzes the synthesis of alpha-ribazole-5'-phosphate from nicotinate mononucleotide (NAMN) and 5,6-dimethylbenzimidazole (DMB). The polypeptide is Nicotinate-nucleotide--dimethylbenzimidazole phosphoribosyltransferase (Bacteroides fragilis (strain YCH46)).